The sequence spans 160 residues: Putative pre-16S rRNA nuclease (160 aa).

This sequence belongs to the YqgF nuclease family.

Its subcellular location is the cytoplasm. Its function is as follows. Could be a nuclease involved in processing of the 5'-end of pre-16S rRNA. This is Putative pre-16S rRNA nuclease from Gluconobacter oxydans (strain 621H) (Gluconobacter suboxydans).